The sequence spans 587 residues: Tectonic-1 (587 aa).

A signal peptide spans 1-22 (MRPRGLPPLLVVLLGCWASVSA). An N-linked (GlcNAc...) asparagine glycan is attached at Asn36. Residues 46 to 68 (GTFPSTRPPGTPRAPGPSSGPRP) are disordered. Residues 51–68 (TRPPGTPRAPGPSSGPRP) show a composition bias toward pro residues. 2 N-linked (GlcNAc...) asparagine glycosylation sites follow: Asn295 and Asn528.

Belongs to the tectonic family. In terms of assembly, part of the tectonic-like complex (also named B9 complex).

The protein resides in the cytoplasm. The protein localises to the cytoskeleton. Its subcellular location is the cilium basal body. It localises to the secreted. In terms of biological role, component of the tectonic-like complex, a complex localized at the transition zone of primary cilia and acting as a barrier that prevents diffusion of transmembrane proteins between the cilia and plasma membranes. Regulator of Hedgehog (Hh), required for both activation and inhibition of the Hh pathway in the patterning of the neural tube. During neural tube development, it is required for formation of the most ventral cell types and for full Hh pathway activation. Functions in Hh signal transduction to fully activate the pathway in the presence of high Hh levels and to repress the pathway in the absence of Hh signals. Modulates Hh signal transduction downstream of SMO and RAB23. In Homo sapiens (Human), this protein is Tectonic-1 (TCTN1).